Consider the following 175-residue polypeptide: Threonylcarbamoyl-AMP synthase (175 aa).

Positions 1–175 (MLHNDDVIAY…IINGKLIRYV (175 aa)) constitute a YrdC-like domain.

This sequence belongs to the SUA5 family. TsaC subfamily.

Its subcellular location is the cytoplasm. The catalysed reaction is L-threonine + hydrogencarbonate + ATP = L-threonylcarbamoyladenylate + diphosphate + H2O. In terms of biological role, required for the formation of a threonylcarbamoyl group on adenosine at position 37 (t(6)A37) in tRNAs that read codons beginning with adenine. Catalyzes the conversion of L-threonine, HCO(3)(-)/CO(2) and ATP to give threonylcarbamoyl-AMP (TC-AMP) as the acyladenylate intermediate, with the release of diphosphate. This Buchnera aphidicola subsp. Acyrthosiphon pisum (strain APS) (Acyrthosiphon pisum symbiotic bacterium) protein is Threonylcarbamoyl-AMP synthase.